A 147-amino-acid polypeptide reads, in one-letter code: Protein OPG060 (147 aa).

This sequence belongs to the orthopoxvirus OPG058 family.

In Bos taurus (Bovine), this protein is Protein OPG060 (OPG060).